A 339-amino-acid chain; its full sequence is Methylglutaconyl-CoA hydratase, mitochondrial (339 aa).

The transit peptide at 1–67 (MAAAVAAAPG…AGGPAPKRGY (67 aa)) directs the protein to the mitochondrion. Lysine 100 is subject to N6-acetyllysine; alternate. Lysine 100 bears the N6-succinyllysine; alternate mark. The interval 105–119 (KNLIKMLSKAVDALK) is RNA-binding. The residue at position 109 (lysine 109) is an N6-succinyllysine. Residues lysine 113 and lysine 144 each carry the N6-acetyllysine; alternate modification. N6-succinyllysine; alternate occurs at positions 113 and 144. N6-succinyllysine occurs at positions 148 and 160. N6-acetyllysine; alternate occurs at positions 204 and 211. Lysine 204 and lysine 211 each carry N6-succinyllysine; alternate. At lysine 329 the chain carries N6-succinyllysine.

This sequence belongs to the enoyl-CoA hydratase/isomerase family. In terms of assembly, homohexamer.

The protein resides in the mitochondrion. The enzyme catalyses (3S)-3-hydroxy-3-methylglutaryl-CoA = 3-methyl-(2E)-glutaconyl-CoA + H2O. It carries out the reaction (3S)-citramalyl-CoA = itaconyl-CoA + H2O. It catalyses the reaction 3-hydroxyisovaleryl-CoA = 3-methylbut-2-enoyl-CoA + H2O. The catalysed reaction is (S)-3-hydroxyglutaryl-CoA = (2E)-glutaconyl-CoA + H2O. The protein operates within amino-acid degradation; L-leucine degradation; (S)-3-hydroxy-3-methylglutaryl-CoA from 3-isovaleryl-CoA: step 3/3. Its function is as follows. Catalyzes the fifth step in the leucine degradation pathway, the reversible hydration of 3-methylglutaconyl-CoA (3-MG-CoA) to 3-hydroxy-3-methylglutaryl-CoA (HMG-CoA). Can catalyze the reverse reaction but at a much lower rate in vitro. HMG-CoA is then quickly degraded by another enzyme (such as HMG-CoA lyase) to give acetyl-CoA and acetoacetate. Uses other substrates such as (2E)-glutaconyl-CoA efficiently in vitro, and to a lesser extent 3-methylcrotonyl-CoA (3-methyl-(2E)-butenoyl-CoA), crotonyl-CoA ((2E)-butenoyl-CoA) and 3-hydroxybutanoyl-CoA (the missing carboxylate reduces affinity to the active site). Originally it was identified as an RNA-binding protein as it binds to AU-rich elements (AREs) in vitro. AREs direct rapid RNA degradation and mRNA deadenylation. Might have itaconyl-CoA hydratase activity, converting itaconyl-CoA into citramalyl-CoA in the C5-dicarboxylate catabolism pathway. The C5-dicarboxylate catabolism pathway is required to detoxify itaconate, an antimicrobial metabolite and immunomodulator produced by macrophages during certain infections, that can act as a vitamin B12-poisoning metabolite. This chain is Methylglutaconyl-CoA hydratase, mitochondrial (AUH), found in Homo sapiens (Human).